The chain runs to 325 residues: Ribosomal RNA small subunit methyltransferase H (325 aa).

S-adenosyl-L-methionine-binding positions include 33–35, D52, L87, D101, and Q108; that span reads GGH. The interval 285 to 325 is disordered; that stretch reads AEPAGEVEKADNPRAASVRLRAAERTAPNPDRTQPTIGGAS. The span at 315–325 shows a compositional bias: polar residues; that stretch reads DRTQPTIGGAS.

Belongs to the methyltransferase superfamily. RsmH family.

Its subcellular location is the cytoplasm. The catalysed reaction is cytidine(1402) in 16S rRNA + S-adenosyl-L-methionine = N(4)-methylcytidine(1402) in 16S rRNA + S-adenosyl-L-homocysteine + H(+). Functionally, specifically methylates the N4 position of cytidine in position 1402 (C1402) of 16S rRNA. The polypeptide is Ribosomal RNA small subunit methyltransferase H (Frankia alni (strain DSM 45986 / CECT 9034 / ACN14a)).